Reading from the N-terminus, the 1706-residue chain is Probable ATP-dependent RNA helicase DDX60-like (1706 aa).

The tract at residues 545–580 is disordered; it reads RPKEDSSGASGEILQNTKPHQITKKSKKKSFLKEDQ. A compositionally biased stretch (polar residues) spans 551–564; sequence SGASGEILQNTKPH. Residues 565–574 show a composition bias toward basic residues; that stretch reads QITKKSKKKS. Positions 752–919 constitute a Helicase ATP-binding domain; it reads LDVVDKNESA…WLQSVKQYWK (168 aa). 765–772 is a binding site for ATP; the sequence is APTSSGKT. Residues 869–872 carry the DEAH box motif; it reads DEVH. The Helicase C-terminal domain occupies 1205 to 1354; the sequence is DVKALHTEIT…QFPLSITLVL (150 aa).

It belongs to the helicase family.

It catalyses the reaction ATP + H2O = ADP + phosphate + H(+). The chain is Probable ATP-dependent RNA helicase DDX60-like from Homo sapiens (Human).